Here is a 428-residue protein sequence, read N- to C-terminus: MYKEPFQPTYEYALECDKHDELKDFQSEFYKKEGTIYLDGNSLGLLSKRAEKSLLTLLDSWKEFGIDGWTEGEHPWFFLSEKLGELTAPLIGSLPEETIVTSSTTANIHQVIATFYEPKGIRTKILADELTFPSDIYALQSQIRLKGLDPDEHLVRVKSRDGRTLSEDDIIHAMTDDIALILLPSVLYRSGQILDMKRLTAEAHKRGIHIGFDLCHSIGSIPHHFKEWDVDFAVWCNYKYLNAGPGGVAGLYVNNKHFNRLPGLSGWFSSRKDKQFDMEHSLTAADHAGAYQIGTPHVLSTAPLIGSLEIFKEAGIEKLREKSLHITRYMLDLIEHELKGFEFTIGNPLEDEKRGGHIYLEHAEAARICKALKANGVIPDFRAPNGVRLAPVALYNTYEEVWNYVQILKKIMKNEEYKNFENKREVVA.

Residues threonine 104, threonine 105, 132 to 135 (FPSD), aspartate 213, histidine 216, and tyrosine 238 each bind pyridoxal 5'-phosphate. At lysine 239 the chain carries N6-(pyridoxal phosphate)lysine. Residues tryptophan 267 and threonine 295 each coordinate pyridoxal 5'-phosphate.

Belongs to the kynureninase family. In terms of assembly, homodimer. Pyridoxal 5'-phosphate serves as cofactor.

The catalysed reaction is L-kynurenine + H2O = anthranilate + L-alanine + H(+). It carries out the reaction 3-hydroxy-L-kynurenine + H2O = 3-hydroxyanthranilate + L-alanine + H(+). Its pathway is amino-acid degradation; L-kynurenine degradation; L-alanine and anthranilate from L-kynurenine: step 1/1. It participates in cofactor biosynthesis; NAD(+) biosynthesis; quinolinate from L-kynurenine: step 2/3. Catalyzes the cleavage of L-kynurenine (L-Kyn) and L-3-hydroxykynurenine (L-3OHKyn) into anthranilic acid (AA) and 3-hydroxyanthranilic acid (3-OHAA), respectively. This is Kynureninase from Bacillus mycoides (strain KBAB4) (Bacillus weihenstephanensis).